The sequence spans 372 residues: Aminodeoxyfutalosine synthase (372 aa).

Residues 53-292 form the Radical SAM core domain; it reads HKTYFVHSIR…VARLYLDNFP (240 aa). [4Fe-4S] cluster contacts are provided by C69, C73, and C76.

The protein belongs to the radical SAM superfamily. MqnE family. [4Fe-4S] cluster is required as a cofactor.

The enzyme catalyses 3-[(1-carboxyvinyl)-oxy]benzoate + S-adenosyl-L-methionine + H2O = 6-amino-6-deoxyfutalosine + hydrogencarbonate + L-methionine + H(+). It functions in the pathway quinol/quinone metabolism; menaquinone biosynthesis. In terms of biological role, radical SAM enzyme that catalyzes the addition of the adenosyl radical to the double bond of 3-[(1-carboxyvinyl)oxy]benzoate, leading to aminodeoxyfutalosine (AFL), a key intermediate in the formation of menaquinone (MK, vitamin K2) from chorismate. This Thermus thermophilus (strain ATCC 27634 / DSM 579 / HB8) protein is Aminodeoxyfutalosine synthase.